The primary structure comprises 230 residues: Orotidine 5'-phosphate decarboxylase (230 aa).

Residues Asp11, Lys34, 61 to 70 (DLKLHDIPNT), Thr117, Arg179, Gln188, Gly208, and Arg209 each bind substrate. Lys63 functions as the Proton donor in the catalytic mechanism.

It belongs to the OMP decarboxylase family. Type 1 subfamily. As to quaternary structure, homodimer.

The catalysed reaction is orotidine 5'-phosphate + H(+) = UMP + CO2. Its pathway is pyrimidine metabolism; UMP biosynthesis via de novo pathway; UMP from orotate: step 2/2. In terms of biological role, catalyzes the decarboxylation of orotidine 5'-monophosphate (OMP) to uridine 5'-monophosphate (UMP). This is Orotidine 5'-phosphate decarboxylase from Streptococcus mutans serotype c (strain ATCC 700610 / UA159).